Consider the following 475-residue polypeptide: Adenylyl cyclase-associated protein 1 (475 aa).

The residue at position 2 (alanine 2) is an N-acetylalanine. Tyrosine 31 is subject to Phosphotyrosine. Residue serine 34 is modified to Phosphoserine. Lysine 81 carries the N6-acetyllysine modification. Disordered stretches follow at residues 216–255 (ELSG…ASRS) and 278–318 (MKTH…TKKE). Over residues 218-228 (SGLPSGPSAGS) the composition is skewed to low complexity. Over residues 229–242 (GPPPPPPGPPPPPV) the composition is skewed to pro residues. Positions 243–255 (STSSGSDESASRS) are enriched in low complexity. Lysine 287 carries the post-translational modification N6-methyllysine. Serine 290, serine 295, and serine 301 each carry phosphoserine. Phosphothreonine is present on threonine 307. 2 positions are modified to phosphoserine: serine 308 and serine 310. The C-CAP/cofactor C-like domain occupies 313–453 (PATKKEPAVL…EGGDFNEFPV (141 aa)). A Glycyl lysine isopeptide (Lys-Gly) (interchain with G-Cter in SUMO1) cross-link involves residue lysine 348.

The protein belongs to the CAP family. In terms of assembly, homodimer. Binds actin monomers.

The protein resides in the cell membrane. Its function is as follows. Directly regulates filament dynamics and has been implicated in a number of complex developmental and morphological processes, including mRNA localization and the establishment of cell polarity. This chain is Adenylyl cyclase-associated protein 1 (CAP1), found in Pongo abelii (Sumatran orangutan).